The chain runs to 174 residues: Ribosome maturation factor RimP (174 aa).

This sequence belongs to the RimP family.

It is found in the cytoplasm. Functionally, required for maturation of 30S ribosomal subunits. The sequence is that of Ribosome maturation factor RimP from Acinetobacter baylyi (strain ATCC 33305 / BD413 / ADP1).